The primary structure comprises 364 residues: Putative acetyl-CoA C-acetyltransferase YhfS (364 aa).

The active-site Acyl-thioester intermediate is C82. H318 serves as the catalytic Proton acceptor.

This sequence belongs to the thiolase-like superfamily. Thiolase family.

In terms of biological role, may be involved in fatty acid metabolism. The protein is Putative acetyl-CoA C-acetyltransferase YhfS (yhfS) of Bacillus subtilis (strain 168).